A 230-amino-acid polypeptide reads, in one-letter code: ATP synthase subunit a (230 aa).

Transmembrane regions (helical) follow at residues 17 to 37 (LPIT…FIMA), 78 to 98 (IFPF…IGVI), 107 to 127 (DLSV…WFGI), 165 to 187 (LFGN…GFLV), and 198 to 218 (EAII…AGGI).

Belongs to the ATPase A chain family. As to quaternary structure, F-type ATPases have 2 components, CF(1) - the catalytic core - and CF(0) - the membrane proton channel. CF(1) has five subunits: alpha(3), beta(3), gamma(1), delta(1), epsilon(1). CF(0) has three main subunits: a(1), b(2) and c(9-12). The alpha and beta chains form an alternating ring which encloses part of the gamma chain. CF(1) is attached to CF(0) by a central stalk formed by the gamma and epsilon chains, while a peripheral stalk is formed by the delta and b chains.

Its subcellular location is the cell inner membrane. Functionally, key component of the proton channel; it plays a direct role in the translocation of protons across the membrane. The sequence is that of ATP synthase subunit a from Legionella pneumophila (strain Paris).